Reading from the N-terminus, the 180-residue chain is Translation initiation factor IF-3 (180 aa).

This sequence belongs to the IF-3 family. In terms of assembly, monomer.

The protein resides in the cytoplasm. Functionally, IF-3 binds to the 30S ribosomal subunit and shifts the equilibrium between 70S ribosomes and their 50S and 30S subunits in favor of the free subunits, thus enhancing the availability of 30S subunits on which protein synthesis initiation begins. In Klebsiella pneumoniae, this protein is Translation initiation factor IF-3.